Reading from the N-terminus, the 255-residue chain is Adenosine 5'-phosphosulfate reductase (255 aa).

The segment at Met-1 to Pro-39 is disordered. Positions 137, 138, 220, and 223 each coordinate [4Fe-4S] cluster. Cys-246 acts as the Nucleophile; cysteine thiosulfonate intermediate in catalysis.

It belongs to the PAPS reductase family. CysH subfamily. It depends on [4Fe-4S] cluster as a cofactor.

It is found in the cytoplasm. The enzyme catalyses [thioredoxin]-disulfide + sulfite + AMP + 2 H(+) = adenosine 5'-phosphosulfate + [thioredoxin]-dithiol. Its pathway is sulfur metabolism; hydrogen sulfide biosynthesis; sulfite from sulfate. In terms of biological role, catalyzes the formation of sulfite from adenosine 5'-phosphosulfate (APS) using thioredoxin as an electron donor. This is Adenosine 5'-phosphosulfate reductase from Deinococcus radiodurans (strain ATCC 13939 / DSM 20539 / JCM 16871 / CCUG 27074 / LMG 4051 / NBRC 15346 / NCIMB 9279 / VKM B-1422 / R1).